A 377-amino-acid polypeptide reads, in one-letter code: Succinyl-diaminopimelate desuccinylase (377 aa).

Histidine 67 is a binding site for Zn(2+). Aspartate 69 is an active-site residue. Aspartate 100 provides a ligand contact to Zn(2+). Catalysis depends on glutamate 134, which acts as the Proton acceptor. Zn(2+) contacts are provided by glutamate 135, glutamate 163, and histidine 349.

Belongs to the peptidase M20A family. DapE subfamily. In terms of assembly, homodimer. Requires Zn(2+) as cofactor. Co(2+) is required as a cofactor.

The catalysed reaction is N-succinyl-(2S,6S)-2,6-diaminopimelate + H2O = (2S,6S)-2,6-diaminopimelate + succinate. It participates in amino-acid biosynthesis; L-lysine biosynthesis via DAP pathway; LL-2,6-diaminopimelate from (S)-tetrahydrodipicolinate (succinylase route): step 3/3. Functionally, catalyzes the hydrolysis of N-succinyl-L,L-diaminopimelic acid (SDAP), forming succinate and LL-2,6-diaminopimelate (DAP), an intermediate involved in the bacterial biosynthesis of lysine and meso-diaminopimelic acid, an essential component of bacterial cell walls. This is Succinyl-diaminopimelate desuccinylase from Actinobacillus pleuropneumoniae serotype 5b (strain L20).